Reading from the N-terminus, the 262-residue chain is Phosphate import ATP-binding protein PstB 2 (262 aa).

The ABC transporter domain occupies 18–257 (FVVRNLDLFY…PSDRRTEDYI (240 aa)). 50–57 (GPSGCGKS) is an ATP binding site.

The protein belongs to the ABC transporter superfamily. Phosphate importer (TC 3.A.1.7) family. In terms of assembly, the complex is composed of two ATP-binding proteins (PstB), two transmembrane proteins (PstC and PstA) and a solute-binding protein (PstS).

Its subcellular location is the cell membrane. It catalyses the reaction phosphate(out) + ATP + H2O = ADP + 2 phosphate(in) + H(+). Its function is as follows. Part of the ABC transporter complex PstSACB involved in phosphate import. Responsible for energy coupling to the transport system. In Symbiobacterium thermophilum (strain DSM 24528 / JCM 14929 / IAM 14863 / T), this protein is Phosphate import ATP-binding protein PstB 2.